A 64-amino-acid chain; its full sequence is Large ribosomal subunit protein bL32 (64 aa).

The protein belongs to the bacterial ribosomal protein bL32 family.

This chain is Large ribosomal subunit protein bL32, found in Bifidobacterium longum (strain DJO10A).